A 411-amino-acid chain; its full sequence is Peptidase T (411 aa).

A Zn(2+)-binding site is contributed by His78. Asp80 is a catalytic residue. A Zn(2+)-binding site is contributed by Asp140. Catalysis depends on Glu173, which acts as the Proton acceptor. 3 residues coordinate Zn(2+): Glu174, Asp196, and His379.

The protein belongs to the peptidase M20B family. Zn(2+) is required as a cofactor.

It is found in the cytoplasm. It catalyses the reaction Release of the N-terminal residue from a tripeptide.. Its function is as follows. Cleaves the N-terminal amino acid of tripeptides. This chain is Peptidase T, found in Yersinia pseudotuberculosis serotype O:1b (strain IP 31758).